The primary structure comprises 358 residues: UPF0324 membrane protein CT0845 (358 aa).

Helical transmembrane passes span 36 to 53, 57 to 76, 83 to 105, 115 to 134, 146 to 168, 178 to 200, 244 to 261, 276 to 295, 307 to 325, and 335 to 357; these read YFPGVLASITVAAAATFL, YGAPTMLFALLIGMAFRFLS, LVGIQFASTTVLRIGVALLGMRI, VKPVVMVFFSVLLTILFGLA, GVLTGGSVGICGASAALAIAAVL, TIFTVISITALSTLAMIAYPVVA, LLRVSMLVPVVFILSLIF, LLPPFIIFFVLFVGINSLGV, VSRWCLVTAIGALGMKTSL, and PVSIMIAETVFLAVLVLGSVVWM.

The protein belongs to the UPF0324 family.

The protein resides in the cell membrane. The protein is UPF0324 membrane protein CT0845 of Chlorobaculum tepidum (strain ATCC 49652 / DSM 12025 / NBRC 103806 / TLS) (Chlorobium tepidum).